The chain runs to 351 residues: Outer membrane porin PhoE (351 aa).

A signal peptide spans Met1–Ala21.

Belongs to the Gram-negative porin family. As to quaternary structure, homotrimer.

Its subcellular location is the cell outer membrane. Its function is as follows. Uptake of inorganic phosphate, phosphorylated compounds, and some other negatively charged solutes. This is Outer membrane porin PhoE (phoE) from Citrobacter freundii.